We begin with the raw amino-acid sequence, 381 residues long: 40-kDa huntingtin-associated protein (381 aa).

Ala-2 carries the N-acetylalanine modification. The short motif at 34-36 is the Nuclear localization signal element; it reads KKR. The disordered stretch occupies residues 221–265; it reads QLELLPQPPSGPQPPLSGPQPRPVLGSTLPLPQPPDHAPGSVAPS. Residues 226 to 242 show a composition bias toward pro residues; it reads PQPPSGPQPPLSGPQPR.

As to quaternary structure, interacts with HTT (via C-terminus). Interacts with RAB5A. Found in a complex with F8A1/F8A2/F8A3, HTT and RAB5A; mediates the recruitment of HTT by RAB5A onto early endosomes. Produced abundantly in a wide variety of cell types.

The protein localises to the cytoplasm. It is found in the nucleus. Its subcellular location is the early endosome. It localises to the nuclear body. In terms of biological role, RAB5A effector molecule that is involved in vesicular trafficking of early endosomes. Mediates the recruitment of HTT by RAB5A onto early endosomes. The HTT-F8A1/F8A2/F8A3-RAB5A complex stimulates early endosomal interaction with actin filaments and inhibits interaction with microtubules, leading to the reduction of endosome motility. This Mus musculus (Mouse) protein is 40-kDa huntingtin-associated protein (F8a1).